We begin with the raw amino-acid sequence, 130 residues long: MAQAQYAGTGRRKNAVARVRLVPGTGKITINKKDVEEYIPHADLRLVINQPFAVTSTQGSYDVFVNVVGGGYAGQSGAIRHGISRALLEVDPDFRDSLKRAGLLTRDARMVERKKPGLKKARKASQFSKR.

Belongs to the universal ribosomal protein uS9 family.

The chain is Small ribosomal subunit protein uS9 from Streptococcus agalactiae serotype Ia (strain ATCC 27591 / A909 / CDC SS700).